The following is a 408-amino-acid chain: Hepatocyte nuclear factor 4-gamma (408 aa).

The segment at residues 9–84 is a DNA-binding region (nuclear receptor); that stretch reads NCLCAICGDR…AGMKKEAVQN (76 aa). NR C4-type zinc fingers lie at residues 12-32 and 48-72; these read CAIC…CDGC and CRFS…LRKC. A Phosphoserine modification is found at Ser-94. Residues 99–328 enclose the NR LBD domain; that stretch reads SNIPSINTLA…NLLQEMLLGG (230 aa). The segment at 369–408 is disordered; the sequence is ATPETPLPSPPQGSGQEPYKITANQASVISHQSLSKQKQL. Phosphothreonine is present on residues Thr-370 and Thr-373. At Ser-377 the chain carries Phosphoserine. Polar residues predominate over residues 390–408; the sequence is TANQASVISHQSLSKQKQL.

The protein belongs to the nuclear hormone receptor family. NR2 subfamily.

The protein resides in the nucleus. Functionally, transcription factor. Has a lower transcription activation potential than HNF4-alpha. The protein is Hepatocyte nuclear factor 4-gamma (Hnf4g) of Mus musculus (Mouse).